The sequence spans 292 residues: Shikimate dehydrogenase (NADP(+)) (292 aa).

Shikimate is bound by residues Ser-25–Ser-27 and Thr-72. Lys-76 functions as the Proton acceptor in the catalytic mechanism. Residues Asn-97 and Asp-113 each contribute to the shikimate site. NADP(+)-binding positions include Gly-137 to Ala-141, Asn-161 to Lys-166, and Met-230. Tyr-232 serves as a coordination point for shikimate. Residue Gly-254 coordinates NADP(+).

Belongs to the shikimate dehydrogenase family. Homodimer.

The catalysed reaction is shikimate + NADP(+) = 3-dehydroshikimate + NADPH + H(+). The protein operates within metabolic intermediate biosynthesis; chorismate biosynthesis; chorismate from D-erythrose 4-phosphate and phosphoenolpyruvate: step 4/7. In terms of biological role, involved in the biosynthesis of the chorismate, which leads to the biosynthesis of aromatic amino acids. Catalyzes the reversible NADPH linked reduction of 3-dehydroshikimate (DHSA) to yield shikimate (SA). The chain is Shikimate dehydrogenase (NADP(+)) from Shewanella sp. (strain MR-7).